A 177-amino-acid chain; its full sequence is Thymidine kinase (177 aa).

Residue 11-18 (GPMFSGKS) coordinates ATP. E83 acts as the Proton acceptor in catalysis. F113 is a binding site for substrate. Residues C138 and C141 each contribute to the Zn(2+) site. Residue 157 to 161 (IEIIG) coordinates substrate. Zn(2+)-binding residues include C170 and C173.

It belongs to the thymidine kinase family. As to quaternary structure, homotetramer. Two molecules of substrate bind to each enzyme tetramer.

The enzyme catalyses thymidine + ATP = dTMP + ADP + H(+). Phosphorylates thymidine and thymidine analogs, such as azidothymidine (AZT). Part of the salvage pathway for pyrimidine deoxyribonucleotide synthesis. This Procyon lotor (Raccoon) protein is Thymidine kinase (OPG101).